We begin with the raw amino-acid sequence, 96 residues long: ATP synthase subunit f, mitochondrial (96 aa).

It belongs to the ATPase F chain family.

It is found in the mitochondrion. The protein localises to the mitochondrion inner membrane. Mitochondrial membrane ATP synthase (F(1)F(0) ATP synthase or Complex V) produces ATP from ADP in the presence of a proton gradient across the membrane which is generated by electron transport complexes of the respiratory chain. F-type ATPases consist of two structural domains, F(1) - containing the extramembraneous catalytic core and F(0) - containing the membrane proton channel, linked together by a central stalk and a peripheral stalk. During catalysis, ATP synthesis in the catalytic domain of F(1) is coupled via a rotary mechanism of the central stalk subunits to proton translocation. In Schizosaccharomyces pombe (strain 972 / ATCC 24843) (Fission yeast), this protein is ATP synthase subunit f, mitochondrial (atp17).